The following is a 334-amino-acid chain: GTP 3',8-cyclase (334 aa).

Residues 11–236 (GFNRKIDYLR…ESTESSQGPA (226 aa)) form the Radical SAM core domain. Arg20 is a GTP binding site. Residues Cys27 and Cys31 each contribute to the [4Fe-4S] cluster site. Tyr33 is a binding site for S-adenosyl-L-methionine. Residue Cys34 coordinates [4Fe-4S] cluster. Residue Arg69 coordinates GTP. Position 73 (Gly73) interacts with S-adenosyl-L-methionine. Thr100 contacts GTP. Ser124 contributes to the S-adenosyl-L-methionine binding site. Lys161 is a GTP binding site. Met195 lines the S-adenosyl-L-methionine pocket. 2 residues coordinate [4Fe-4S] cluster: Cys260 and Cys263. 265-267 (RVR) lines the GTP pocket. A [4Fe-4S] cluster-binding site is contributed by Cys277.

Belongs to the radical SAM superfamily. MoaA family. Monomer and homodimer. It depends on [4Fe-4S] cluster as a cofactor.

It carries out the reaction GTP + AH2 + S-adenosyl-L-methionine = (8S)-3',8-cyclo-7,8-dihydroguanosine 5'-triphosphate + 5'-deoxyadenosine + L-methionine + A + H(+). The protein operates within cofactor biosynthesis; molybdopterin biosynthesis. Catalyzes the cyclization of GTP to (8S)-3',8-cyclo-7,8-dihydroguanosine 5'-triphosphate. The sequence is that of GTP 3',8-cyclase from Pseudomonas putida (strain W619).